The following is a 1053-amino-acid chain: Serine/threonine-protein phosphatase 6 regulatory ankyrin repeat subunit A (1053 aa).

ANK repeat units lie at residues 40-69 (EKRT…RVNA), 73-102 (KWLT…DVNA), 106-135 (NWQT…NVNV), 139-168 (AGRT…NINA), 172-201 (KDRR…EVTC), 205-234 (KSYT…DMNE), 238-267 (YGNT…NVNQ), 271-301 (KGFT…DVNM), 305-334 (DGKT…VIDC), 338-367 (NGNT…DTAK), 371-400 (HGMF…DIDT), 404-433 (FGRT…DFNK), 437-466 (FGRS…SVND), 470-500 (RGCT…NPGI), 504-534 (QGYN…DVLM), 549-578 (ATIS…DLDV), 582-611 (SGRT…SILV), 616-645 (LKRT…PQNA), 652-681 (NGQT…NVDA), 685-714 (WGRT…KCLL), 718-747 (RGRT…SVDA), 755-786 (HGYT…KIDG), 788-817 (AFSP…SIVN), 822-851 (KGRT…QVNS), 855-885 (TGKT…DLTL), 889-918 (SKNT…DRNL), and 925-954 (ALQT…SVLA). A phosphoserine mark is found at Ser1007 and Ser1011.

As to quaternary structure, protein phosphatase 6 (PP6) holoenzyme is proposed to be a heterotrimeric complex formed by the catalytic subunit, a SAPS domain-containing subunit (PP6R) and an ankyrin repeat-domain containing regulatory subunit (ARS). Interacts with PPP1C and HNRPK. Interacts with PPP6C, PPP6R1 and PPP6R3. In terms of processing, ubiquitinated by the ECS(RAB40C) complex leading to its degradation and decreased PP6 activity. As to expression, widely expressed (at protein level).

The protein localises to the nucleus. It is found in the nucleoplasm. Its subcellular location is the cytoplasm. The protein resides in the cytosol. It localises to the cell projection. The protein localises to the lamellipodium. Putative regulatory subunit of protein phosphatase 6 (PP6) that may be involved in the recognition of phosphoprotein substrates. Involved in the PP6-mediated dephosphorylation of NFKBIE opposing its degradation in response to TNF-alpha. Selectively inhibits the phosphatase activity of PPP1C. Targets PPP1C to modulate HNRPK phosphorylation. Involved in the PP6-mediated dephosphorylation of MOB1 and induced focal adhesion assembly during cell migration. In Mus musculus (Mouse), this protein is Serine/threonine-protein phosphatase 6 regulatory ankyrin repeat subunit A (Ankrd28).